The sequence spans 165 residues: Endoribonuclease YbeY (165 aa).

The Zn(2+) site is built by histidine 130, histidine 134, and histidine 140.

This sequence belongs to the endoribonuclease YbeY family. Zn(2+) is required as a cofactor.

Its subcellular location is the cytoplasm. In terms of biological role, single strand-specific metallo-endoribonuclease involved in late-stage 70S ribosome quality control and in maturation of the 3' terminus of the 16S rRNA. The polypeptide is Endoribonuclease YbeY (Streptococcus sanguinis (strain SK36)).